Reading from the N-terminus, the 469-residue chain is Transcription factor E2FB (469 aa).

Disordered stretches follow at residues 1–28 and 84–118; these read MSEEVPQQFPSSKRQLHPSLSSMKPPLV and QTPVSGKGGKAKKTSRSAKSNKSGTLASGSNAGSP. 2 stretches are compositionally biased toward polar residues: residues 8-22 and 100-118; these read QFPSSKRQLHPSLSS and SAKSNKSGTLASGSNAGSP. A DNA-binding region spans residues 129–194; it reads RYDSSLGLLT…TLKNRIQWKG (66 aa). A coiled-coil region spans residues 202 to 246; it reads ETIESIANLQDEVQNLAAEEARLDDQIRESQERLTSLSEDENNKR. The tract at residues 210–238 is leucine-zipper; that stretch reads LQDEVQNLAAEEARLDDQIRESQERLTSL. The segment at 319–374 is disordered; the sequence is PQADEPSNVPDEPSNVPDVPSNLPSTSGLPENHDVSMPMKEESTERNMETQEVDDT. A compositionally biased stretch (basic and acidic residues) spans 349 to 374; sequence ENHDVSMPMKEESTERNMETQEVDDT. The retinoblastoma protein binding stretch occupies residues 403–419; sequence DYWFRSEVGEVSITDMW. The tract at residues 426–469 is disordered; that stretch reads DWNQMITFDQDHAGPSDNKILEQPQTPSSPTPEESTATRSPTGS. The segment covering 447-469 has biased composition (low complexity); that stretch reads EQPQTPSSPTPEESTATRSPTGS.

It belongs to the E2F/DP family. In terms of assembly, heterodimer with DP proteins. Interacts (via dimerization domain) preferentially with DPA, but also with DPB. Interacts with PURA1 and retinoblastoma-related protein RBR1. Component of a DREAM-like complex which modulates a variety of developmentally regulated genes and of the mitotic genes in proliferating and differentiated cells. Interacts with MYB3R4 only at early stages of leaves development. Phosphorylated. Expressed in proliferating cells and several differentiated tissues. Detected in inflorescence and shoot apical meristems, cotyledonary vascular tissues, leaf primordia, young leaves, base of trichomes, central cylinder and elongation zone of roots, lateral root primordia, flowers, pistils of immature flowers and pollen grains.

It is found in the cytoplasm. It localises to the nucleus. Transcription activator that binds DNA cooperatively with DP proteins through the E2 recognition site, 5'-TTTC[CG]CGC-3' found in the promoter region of a number of genes whose products are involved in cell cycle regulation or in DNA replication. The binding of retinoblastoma-related proteins represses transactivation. Involved in the control of cell-cycle progression from G1 to S phase and from G2 to M phase. Stimulates cell proliferation and delays differentiation. Represses cell enlargement and endoreduplication in auxin-free conditions. The sequence is that of Transcription factor E2FB (E2FB) from Arabidopsis thaliana (Mouse-ear cress).